The primary structure comprises 258 residues: Large ribosomal subunit protein bL28m (258 aa).

The N-terminal 21 residues, 1–21, are a transit peptide targeting the mitochondrion; that stretch reads MQKIFRPFQLTRGFTSSVKNF.

Belongs to the bacterial ribosomal protein bL28 family. In terms of assembly, component of the mitochondrial large ribosomal subunit (mt-LSU). Mature yeast 74S mitochondrial ribosomes consist of a small (37S) and a large (54S) subunit. The 37S small subunit contains a 15S ribosomal RNA (15S mt-rRNA) and 34 different proteins. The 54S large subunit contains a 21S rRNA (21S mt-rRNA) and 46 different proteins.

It localises to the mitochondrion. Functionally, component of the mitochondrial ribosome (mitoribosome), a dedicated translation machinery responsible for the synthesis of mitochondrial genome-encoded proteins, including at least some of the essential transmembrane subunits of the mitochondrial respiratory chain. The mitoribosomes are attached to the mitochondrial inner membrane and translation products are cotranslationally integrated into the membrane. The sequence is that of Large ribosomal subunit protein bL28m (MRPL24) from Saccharomyces cerevisiae (strain ATCC 204508 / S288c) (Baker's yeast).